Reading from the N-terminus, the 485-residue chain is ATP synthase subunit beta (485 aa).

158 to 165 (GGAGVGKT) is an ATP binding site.

Belongs to the ATPase alpha/beta chains family. As to quaternary structure, F-type ATPases have 2 components, CF(1) - the catalytic core - and CF(0) - the membrane proton channel. CF(1) has five subunits: alpha(3), beta(3), gamma(1), delta(1), epsilon(1). CF(0) has four main subunits: a(1), b(1), b'(1) and c(9-12).

It localises to the cell inner membrane. It catalyses the reaction ATP + H2O + 4 H(+)(in) = ADP + phosphate + 5 H(+)(out). Functionally, produces ATP from ADP in the presence of a proton gradient across the membrane. The catalytic sites are hosted primarily by the beta subunits. The sequence is that of ATP synthase subunit beta from Erythrobacter litoralis (strain HTCC2594).